A 129-amino-acid polypeptide reads, in one-letter code: Membrane protein 0 (129 aa).

A disordered region spans residues 1-25 (MATVHYSRRPGTPPVTLTSSPSMDD). The short motif at 44 to 47 (PPPY) is the PPXY motif element. Residues 100–120 (FLILFGILTLTAVVVAIVAVF) form a helical membrane-spanning segment.

The protein belongs to the varicellovirus ORF0 protein family. As to quaternary structure, interacts with host ITCH; this interaction probably mediates ITCH degradation.

The protein localises to the host Golgi apparatus membrane. In Homo sapiens (Human), this protein is Membrane protein 0.